The chain runs to 415 residues: GPI mannosyltransferase 1 (415 aa).

A run of 9 helical transmembrane segments spans residues 8–28 (PSLVFGAAIVLRAILLVYGAW), 82–102 (FFSFGKVLFALSDVVAGWLIA), 134–154 (TRGSSEGLLCVLVIALLWAVL), 158–178 (ITLAGVLLGLSVHFKIYPFVY), 222–242 (LLLTTTALATFSGLNISMYIL), 284–304 (FESLAFIPQLLLSVVVIPIVL), 329–349 (SQYFLWYLIFLPFYLPSSSLM), 354–374 (LGITVTALWVIAQALWLQQGY), and 387–407 (GLFLASLGFFAVNIWILGIII).

Belongs to the PIGM family.

The protein resides in the endoplasmic reticulum membrane. Its pathway is glycolipid biosynthesis; glycosylphosphatidylinositol-anchor biosynthesis. Functionally, mannosyltransferase involved in glycosylphosphatidylinositol-anchor biosynthesis. Transfers the first alpha-1,4-mannose to GlcN-acyl-PI during GPI precursor assembly. Required for cell wall integrity. This chain is GPI mannosyltransferase 1 (gpi14), found in Aspergillus oryzae (strain ATCC 42149 / RIB 40) (Yellow koji mold).